The following is a 509-amino-acid chain: Phosphoglycerate kinase, glycosomal (509 aa).

The (2R)-3-phosphoglycerate site is built by valine 32, aspartate 33, phenylalanine 34, asparagine 35, arginine 48, serine 70, histidine 71, glycine 73, arginine 74, arginine 224, histidine 260, and arginine 261. Glycine 306 contacts ADP. Glycine 306 lines the CDP pocket. Lysine 308 contacts (2R)-3-phosphoglycerate. Lysine 308 serves as a coordination point for AMP. Residue aspartate 311 coordinates CDP. Aspartate 311 is a binding site for Mg(2+). Positions 312 and 330 each coordinate ADP. Lysine 312 contacts AMP. Lysine 312 serves as a coordination point for ATP. Glycine 330 serves as a coordination point for CDP. Residues alanine 331 and alanine 403 each coordinate AMP. ATP-binding residues include alanine 331 and alanine 403. Residues alanine 403 and asparagine 427 each contribute to the ADP site. CDP-binding residues include glycine 428 and phenylalanine 433. ADP is bound by residues phenylalanine 433, glutamate 434, aspartate 466, and serine 467. Glutamate 434 is a binding site for AMP. 3 residues coordinate ATP: glutamate 434, aspartate 466, and serine 467. Position 466 (aspartate 466) interacts with Mg(2+).

It belongs to the phosphoglycerate kinase family. As to quaternary structure, monomer. Mg(2+) is required as a cofactor.

It localises to the glycosome. The enzyme catalyses (2R)-3-phosphoglycerate + ATP = (2R)-3-phospho-glyceroyl phosphate + ADP. It participates in carbohydrate degradation; glycolysis; pyruvate from D-glyceraldehyde 3-phosphate: step 2/5. The polypeptide is Phosphoglycerate kinase, glycosomal (56PGK) (Trypanosoma congolense).